The chain runs to 306 residues: Pseudouridine-5'-phosphate glycosidase (306 aa).

The active-site Proton donor is Glu27. Positions 88 and 108 each coordinate substrate. Asp140 is a Mn(2+) binding site. Position 142-144 (142-144 (SAD)) interacts with substrate. The Nucleophile role is filled by Lys161.

Belongs to the pseudouridine-5'-phosphate glycosidase family. In terms of assembly, homotrimer. The cofactor is Mn(2+).

It catalyses the reaction D-ribose 5-phosphate + uracil = psi-UMP + H2O. Catalyzes the reversible cleavage of pseudouridine 5'-phosphate (PsiMP) to ribose 5-phosphate and uracil. Functions biologically in the cleavage direction, as part of a pseudouridine degradation pathway. This Petrotoga mobilis (strain DSM 10674 / SJ95) protein is Pseudouridine-5'-phosphate glycosidase.